Reading from the N-terminus, the 442-residue chain is MAIFYSEKTAKQTAKNCCKTTARQIVNIHSLDYQGLDVAKINGKTWFIENALPNEQVLIHVIEEKRQYGRAKANKILQASPLRQQPSCISYPQCGGCQMQHIKLDVQRQTKQQAFFKQLQRLQTEPIDWQPMISGQDKHYRRRTKLSMAIQRNQLVIGFRQQNTHQIIPLTDCEVLEQPLSTLLPKLQHLFAGWKMKKALGHIELVNADNTRAMLVLHIGKINAQDQHMLLNFAKAEQLSLYLMCDENHIEHLCGEAPYYQINGLTLHFCIRDFIQVNQPLNQKMVNKALEWLAITAEDRILDLFCGIGNFSLPIAQQAGFVVGVEGVEEMVKQAKINQQTSGLNNIAFYQTNLAESFVDQHWATQPFNKVLLDPARQGALFCLDHLMALTPERIIYISCNPATLMRDAEKLIRHGYKIAKSAVIDMFPHTGHLESISMFIK.

The TRAM domain occupies 10–75 (AKQTAKNCCK…RQYGRAKANK (66 aa)). Residues Cys88, Cys94, Cys97, and Cys173 each contribute to the [4Fe-4S] cluster site. Residues Gln276, Phe305, Asn310, Glu326, Asn353, and Asp374 each coordinate S-adenosyl-L-methionine. Catalysis depends on Cys400, which acts as the Nucleophile.

This sequence belongs to the class I-like SAM-binding methyltransferase superfamily. RNA M5U methyltransferase family. RlmD subfamily.

It carries out the reaction uridine(1939) in 23S rRNA + S-adenosyl-L-methionine = 5-methyluridine(1939) in 23S rRNA + S-adenosyl-L-homocysteine + H(+). Its function is as follows. Catalyzes the formation of 5-methyl-uridine at position 1939 (m5U1939) in 23S rRNA. The protein is 23S rRNA (uracil(1939)-C(5))-methyltransferase RlmD of Haemophilus ducreyi (strain 35000HP / ATCC 700724).